A 62-amino-acid chain; its full sequence is Sec-independent protein translocase protein TatAc (62 aa).

Residues 8 to 28 (ILVILFVGFLVFGPDKLPALG) form a helical membrane-spanning segment.

It belongs to the TatA/E family. In terms of assembly, forms a complex with TatC.

The protein localises to the cell membrane. Functionally, part of the twin-arginine translocation (Tat) system that transports large folded proteins containing a characteristic twin-arginine motif in their signal peptide across membranes. TatA could form the protein-conducting channel of the Tat system. The protein is Sec-independent protein translocase protein TatAc of Bacillus subtilis (strain 168).